The chain runs to 45 residues: Major cold shock protein (45 aa).

The region spanning 1-45 (EKGFGFISTENGQDVFAHFSAIQTNGFKTLEEGQKVEFDVEEGQR) is the CSD domain.

As to quaternary structure, homodimer.

The protein resides in the cytoplasm. In Streptococcus dysgalactiae, this protein is Major cold shock protein (cspA).